Consider the following 215-residue polypeptide: Ras-related protein Rab-5B (215 aa).

GTP contacts are provided by S29, A30, G32, K33, S34, S35, H46, E47, T52, G78, N133, K134, D136, A164, and K165. Residue S34 coordinates Mg(2+). 2 consecutive short sequence motifs (switch) follow at residues 44-56 and 77-93; these read QFHE…IGAA and AGQE…YRGA. T52 is a binding site for Mg(2+). The disordered stretch occupies residues 184-215; sequence SEPQSTSGAAGRSRGVDLHEQTQQNKSQCCSN. Polar residues predominate over residues 204-215; that stretch reads QTQQNKSQCCSN. Residues C212 and C213 are each lipidated (S-geranylgeranyl cysteine).

It belongs to the small GTPase superfamily. Rab family. Mg(2+) is required as a cofactor.

It is found in the cell membrane. The protein resides in the early endosome membrane. The catalysed reaction is GTP + H2O = GDP + phosphate + H(+). With respect to regulation, regulated by guanine nucleotide exchange factors (GEFs) which promote the exchange of bound GDP for free GTP. Regulated by GTPase activating proteins (GAPs) which increase the GTP hydrolysis activity. Inhibited by GDP dissociation inhibitors (GDIs). Functionally, the small GTPases Rab are key regulators of intracellular membrane trafficking, from the formation of transport vesicles to their fusion with membranes. Rabs cycle between an inactive GDP-bound form and an active GTP-bound form that is able to recruit to membranes different sets of downstream effectors directly responsible for vesicle formation, movement, tethering and fusion. This chain is Ras-related protein Rab-5B (RAB5B), found in Gallus gallus (Chicken).